The chain runs to 486 residues: GTPase Obg (486 aa).

The Obg domain occupies serine 2–valine 159. The region spanning alanine 160 to alanine 340 is the OBG-type G domain. Residues glycine 166–serine 173, phenylalanine 191–valine 195, aspartate 212–glycine 215, asparagine 292–aspartate 295, and serine 321–valine 323 each bind GTP. Positions 173 and 193 each coordinate Mg(2+). One can recognise an OCT domain in the interval proline 358–proline 438. The tract at residues arginine 462–glutamine 486 is disordered.

It belongs to the TRAFAC class OBG-HflX-like GTPase superfamily. OBG GTPase family. Monomer. It depends on Mg(2+) as a cofactor.

Its subcellular location is the cytoplasm. Its function is as follows. An essential GTPase which binds GTP, GDP and possibly (p)ppGpp with moderate affinity, with high nucleotide exchange rates and a fairly low GTP hydrolysis rate. Plays a role in control of the cell cycle, stress response, ribosome biogenesis and in those bacteria that undergo differentiation, in morphogenesis control. This chain is GTPase Obg, found in Rhodococcus jostii (strain RHA1).